The primary structure comprises 90 residues: Bombyxin B-9 (90 aa).

An N-terminal signal peptide occupies residues 1–20; the sequence is MMKTAVMFILVVVISLTYSS. 3 disulfides stabilise this stretch: C30-C75, C42-C88, and C74-C79. The propeptide at 49-64 is c peptide like; it reads GGAQYAPYWQETYLRS.

The protein belongs to the insulin family. Heterodimer of a B chain and an A chain linked by two disulfide bonds.

It is found in the secreted. Brain peptide responsible for activation of prothoracic glands to produce ecdysone in insects. The polypeptide is Bombyxin B-9 (BBXB9) (Bombyx mori (Silk moth)).